A 348-amino-acid polypeptide reads, in one-letter code: Lipoyl synthase (348 aa).

[4Fe-4S] cluster contacts are provided by cysteine 55, cysteine 60, cysteine 66, cysteine 81, cysteine 85, cysteine 88, and serine 292. Residues 67-281 form the Radical SAM core domain; the sequence is WESREATFLI…ADAAKEMGFA (215 aa).

It belongs to the radical SAM superfamily. Lipoyl synthase family. [4Fe-4S] cluster is required as a cofactor.

The protein resides in the cytoplasm. The catalysed reaction is [[Fe-S] cluster scaffold protein carrying a second [4Fe-4S](2+) cluster] + N(6)-octanoyl-L-lysyl-[protein] + 2 oxidized [2Fe-2S]-[ferredoxin] + 2 S-adenosyl-L-methionine + 4 H(+) = [[Fe-S] cluster scaffold protein] + N(6)-[(R)-dihydrolipoyl]-L-lysyl-[protein] + 4 Fe(3+) + 2 hydrogen sulfide + 2 5'-deoxyadenosine + 2 L-methionine + 2 reduced [2Fe-2S]-[ferredoxin]. It functions in the pathway protein modification; protein lipoylation via endogenous pathway; protein N(6)-(lipoyl)lysine from octanoyl-[acyl-carrier-protein]: step 2/2. Its function is as follows. Catalyzes the radical-mediated insertion of two sulfur atoms into the C-6 and C-8 positions of the octanoyl moiety bound to the lipoyl domains of lipoate-dependent enzymes, thereby converting the octanoylated domains into lipoylated derivatives. The sequence is that of Lipoyl synthase from Corynebacterium glutamicum (strain R).